Reading from the N-terminus, the 128-residue chain is Riboflavin kinase (128 aa).

12–17 lines the CDP pocket; it reads GKGEGK. Positions 41 and 43 each coordinate Mg(2+). FMN is bound by residues T97 and E105. 110-113 serves as a coordination point for CDP; it reads IKLR.

This sequence belongs to the archaeal riboflavin kinase family. Requires Mg(2+) as cofactor.

The catalysed reaction is riboflavin + CTP = CDP + FMN + H(+). The protein operates within cofactor biosynthesis; FMN biosynthesis; FMN from riboflavin (CTP route): step 1/1. Functionally, catalyzes the CTP-dependent phosphorylation of riboflavin (vitamin B2) to form flavin mononucleotide (FMN). The polypeptide is Riboflavin kinase (Methanococcus aeolicus (strain ATCC BAA-1280 / DSM 17508 / OCM 812 / Nankai-3)).